The following is a 969-amino-acid chain: Glycine dehydrogenase (decarboxylating) (969 aa).

At K716 the chain carries N6-(pyridoxal phosphate)lysine.

Belongs to the GcvP family. The glycine cleavage system is composed of four proteins: P, T, L and H. The cofactor is pyridoxal 5'-phosphate.

It carries out the reaction N(6)-[(R)-lipoyl]-L-lysyl-[glycine-cleavage complex H protein] + glycine + H(+) = N(6)-[(R)-S(8)-aminomethyldihydrolipoyl]-L-lysyl-[glycine-cleavage complex H protein] + CO2. Functionally, the glycine cleavage system catalyzes the degradation of glycine. The P protein binds the alpha-amino group of glycine through its pyridoxal phosphate cofactor; CO(2) is released and the remaining methylamine moiety is then transferred to the lipoamide cofactor of the H protein. The polypeptide is Glycine dehydrogenase (decarboxylating) (Shewanella woodyi (strain ATCC 51908 / MS32)).